The chain runs to 432 residues: Alpha-2 adrenergic receptor (432 aa).

The Extracellular portion of the chain corresponds to 1-32 (MDPLNATGMDAFTAIHLNASWSADSGYSLAAI). N-linked (GlcNAc...) asparagine glycans are attached at residues Asn-5 and Asn-18. A helical transmembrane segment spans residues 33 to 57 (ASIAALVSFLILFTVVGNILVVIAV). The Cytoplasmic portion of the chain corresponds to 58–69 (LTSRALKAPQNL). The chain crosses the membrane as a helical span at residues 70-95 (FLVSLATADILVATLVMPFSLANELM). Residues 96 to 105 (GYWYFGKVWC) lie on the Extracellular side of the membrane. Cys-105 and Cys-183 are joined by a disulfide. A helical membrane pass occupies residues 106–128 (GIYLALDVLFCTSSIVHLCAISL). Residues 129–149 (DRYWSVTQAVEYNLKRTPKRV) lie on the Cytoplasmic side of the membrane. Residues 150–172 (KCIIVIVWLISAFISSPPLLSID) traverse the membrane as a helical segment. Over 173–188 (SNNYISSQPQCMLNDD) the chain is Extracellular. The helical transmembrane segment at 189-212 (TWYILSSSMASFFAPCLIMILVYI) threads the bilayer. Residues 213 to 356 (RIYQVAKTRT…QAREKRFTFV (144 aa)) lie on the Cytoplasmic side of the membrane. The tract at residues 222 to 319 (TRSMSGKEPR…SISKQSARIS (98 aa)) is disordered. Composition is skewed to polar residues over residues 235 to 246 (VTQTENGLNKAN) and 265 to 275 (SQRTVTIGQQT). Residues 288–300 (GKGHKPQRQDSQR) are compositionally biased toward basic and acidic residues. The span at 309–319 (SSISKQSARIS) shows a compositional bias: polar residues. A helical transmembrane segment spans residues 357-380 (LAVVMGVFVVCWFPFFFSYSLHAV). Topologically, residues 381–393 (CRDYCKIPDTLFK) are extracellular. The chain crosses the membrane as a helical span at residues 394–413 (FFWIGYCNSSLNPAIYTIFN). Residues 414-432 (RDFRRAFQKILCKSWKKSF) are Cytoplasmic-facing.

Belongs to the G-protein coupled receptor 1 family.

The protein resides in the cell membrane. Its function is as follows. Alpha-2 adrenergic receptors mediate the catecholamine-induced inhibition of adenylate cyclase through the action of G proteins. The protein is Alpha-2 adrenergic receptor of Labrus ossifagus (Cuckoo wrasse).